A 157-amino-acid polypeptide reads, in one-letter code: Crossover junction endodeoxyribonuclease RuvC (157 aa).

Active-site residues include D7, E67, and D139. Mg(2+) is bound by residues D7, E67, and D139.

It belongs to the RuvC family. As to quaternary structure, homodimer which binds Holliday junction (HJ) DNA. The HJ becomes 2-fold symmetrical on binding to RuvC with unstacked arms; it has a different conformation from HJ DNA in complex with RuvA. In the full resolvosome a probable DNA-RuvA(4)-RuvB(12)-RuvC(2) complex forms which resolves the HJ. The cofactor is Mg(2+).

Its subcellular location is the cytoplasm. It catalyses the reaction Endonucleolytic cleavage at a junction such as a reciprocal single-stranded crossover between two homologous DNA duplexes (Holliday junction).. Its function is as follows. The RuvA-RuvB-RuvC complex processes Holliday junction (HJ) DNA during genetic recombination and DNA repair. Endonuclease that resolves HJ intermediates. Cleaves cruciform DNA by making single-stranded nicks across the HJ at symmetrical positions within the homologous arms, yielding a 5'-phosphate and a 3'-hydroxyl group; requires a central core of homology in the junction. The consensus cleavage sequence is 5'-(A/T)TT(C/G)-3'. Cleavage occurs on the 3'-side of the TT dinucleotide at the point of strand exchange. HJ branch migration catalyzed by RuvA-RuvB allows RuvC to scan DNA until it finds its consensus sequence, where it cleaves and resolves the cruciform DNA. The sequence is that of Crossover junction endodeoxyribonuclease RuvC from Prochlorococcus marinus (strain MIT 9301).